The following is a 693-amino-acid chain: Elongation factor G (693 aa).

Positions 8-282 (EKTRNIGIMA…AVIDYLPSPL (275 aa)) constitute a tr-type G domain. GTP-binding positions include 17-24 (AHVDAGKT), 81-85 (DTPGH), and 135-138 (NKMD).

This sequence belongs to the TRAFAC class translation factor GTPase superfamily. Classic translation factor GTPase family. EF-G/EF-2 subfamily.

The protein resides in the cytoplasm. Its function is as follows. Catalyzes the GTP-dependent ribosomal translocation step during translation elongation. During this step, the ribosome changes from the pre-translocational (PRE) to the post-translocational (POST) state as the newly formed A-site-bound peptidyl-tRNA and P-site-bound deacylated tRNA move to the P and E sites, respectively. Catalyzes the coordinated movement of the two tRNA molecules, the mRNA and conformational changes in the ribosome. The chain is Elongation factor G from Streptococcus pneumoniae (strain P1031).